The following is a 658-amino-acid chain: Translation factor GUF1, mitochondrial (658 aa).

A mitochondrion-targeting transit peptide spans 1 to 40 (MRGCLQTVRWLTSAWQRPPSYPPLSRAAPCRFFNVSIPRN). The tr-type G domain maps to 60-240 (DRFRNFCIVA…TVVEQIPAPV (181 aa)). GTP-binding positions include 69–76 (AHVDHGKS), 133–137 (DTPGH), and 187–190 (NKVD).

The protein belongs to the TRAFAC class translation factor GTPase superfamily. Classic translation factor GTPase family. LepA subfamily.

Its subcellular location is the mitochondrion inner membrane. It catalyses the reaction GTP + H2O = GDP + phosphate + H(+). Its function is as follows. Promotes mitochondrial protein synthesis. May act as a fidelity factor of the translation reaction, by catalyzing a one-codon backward translocation of tRNAs on improperly translocated ribosomes. Binds to mitochondrial ribosomes in a GTP-dependent manner. The chain is Translation factor GUF1, mitochondrial from Paracoccidioides brasiliensis (strain Pb18).